A 37-amino-acid chain; its full sequence is Large ribosomal subunit protein bL36c (37 aa).

Belongs to the bacterial ribosomal protein bL36 family.

Its subcellular location is the plastid. The protein localises to the chloroplast. The sequence is that of Large ribosomal subunit protein bL36c from Physcomitrium patens (Spreading-leaved earth moss).